A 245-amino-acid chain; its full sequence is tRNA pseudouridine synthase A 1 (245 aa).

Aspartate 53 acts as the Nucleophile in catalysis. Residue tyrosine 111 participates in substrate binding.

It belongs to the tRNA pseudouridine synthase TruA family. In terms of assembly, homodimer.

It catalyses the reaction uridine(38/39/40) in tRNA = pseudouridine(38/39/40) in tRNA. Its function is as follows. Formation of pseudouridine at positions 38, 39 and 40 in the anticodon stem and loop of transfer RNAs. The chain is tRNA pseudouridine synthase A 1 from Clostridium tetani (strain Massachusetts / E88).